Reading from the N-terminus, the 656-residue chain is DNA ligase (656 aa).

NAD(+)-binding positions include 32 to 36 (DAVYD) and 81 to 82 (SL). Residue Lys-112 is the N6-AMP-lysine intermediate of the active site. Residues Arg-133, Glu-167, and Lys-306 each contribute to the NAD(+) site. Zn(2+)-binding residues include Cys-400, Cys-403, Cys-416, and Cys-421. The BRCT domain maps to 577–656 (KSSSVFNNKT…ELLKRLKELD (80 aa)).

Belongs to the NAD-dependent DNA ligase family. LigA subfamily. The cofactor is Mg(2+). It depends on Mn(2+) as a cofactor.

The catalysed reaction is NAD(+) + (deoxyribonucleotide)n-3'-hydroxyl + 5'-phospho-(deoxyribonucleotide)m = (deoxyribonucleotide)n+m + AMP + beta-nicotinamide D-nucleotide.. DNA ligase that catalyzes the formation of phosphodiester linkages between 5'-phosphoryl and 3'-hydroxyl groups in double-stranded DNA using NAD as a coenzyme and as the energy source for the reaction. It is essential for DNA replication and repair of damaged DNA. This chain is DNA ligase, found in Helicobacter pylori (strain P12).